A 396-amino-acid chain; its full sequence is Period circadian protein (396 aa).

Disordered regions lie at residues 27–120 (VTAP…APPV), 164–188 (LEYSGPGPGHGHGIKRGGSHSWEGE), 253–273 (GGNGNVGSGNGNNNQPSTNQY), and 333–362 (SPSSTNTNPNRPHKHAHVHNSSEKPSTSQA). The segment covering 93-114 (GTSGTGNSGDGGGGGGANGTGS) has biased composition (gly residues). Positions 253-262 (GGNGNVGSGN) are enriched in gly residues. A compositionally biased stretch (low complexity) spans 333-342 (SPSSTNTNPN).

In terms of assembly, forms a heterodimer with timeless (TIM); the complex then translocates into the nucleus. Phosphorylated with a circadian rhythmicity, probably by the double-time protein (dbt). Phosphorylation could be implicated in the stability of per monomer and in the formation of heterodimer per-tim.

The protein resides in the nucleus. It localises to the cytoplasm. Its subcellular location is the perinuclear region. Essential for biological clock functions. Determines the period length of circadian and ultradian rhythms; an increase in PER dosage leads to shortened circadian rhythms and a decrease leads to lengthened circadian rhythms. Essential for the circadian rhythmicity of locomotor activity, eclosion behavior, and for the rhythmic component of the male courtship song that originates in the thoracic nervous system. The biological cycle depends on the rhythmic formation and nuclear localization of the TIM-PER complex. Light induces the degradation of TIM, which promotes elimination of PER. Nuclear activity of the heterodimer coordinatively regulates PER and TIM transcription through a negative feedback loop. Behaves as a negative element in circadian transcriptional loop. Does not appear to bind DNA, suggesting indirect transcriptional inhibition. This chain is Period circadian protein (per), found in Drosophila pavlovskiana (Fruit fly).